The primary structure comprises 148 residues: 3-dehydroquinate dehydratase (148 aa).

Tyr23 (proton acceptor) is an active-site residue. 3 residues coordinate substrate: Asn75, His81, and Asp88. The Proton donor role is filled by His101. Substrate contacts are provided by residues 102–103 (LS) and Arg112.

Belongs to the type-II 3-dehydroquinase family. In terms of assembly, homododecamer.

The catalysed reaction is 3-dehydroquinate = 3-dehydroshikimate + H2O. It participates in metabolic intermediate biosynthesis; chorismate biosynthesis; chorismate from D-erythrose 4-phosphate and phosphoenolpyruvate: step 3/7. Functionally, catalyzes a trans-dehydration via an enolate intermediate. This chain is 3-dehydroquinate dehydratase, found in Halorhodospira halophila (strain DSM 244 / SL1) (Ectothiorhodospira halophila (strain DSM 244 / SL1)).